Reading from the N-terminus, the 118-residue chain is MSTSVKQTEARAIAKYIRMSPFKVRRVLKQIRGRSYKEALMILEFMPYAACKPVLQLLQSAAANAQNNYGLQKDQMIVNYAYADPGPVLKRFRPRAQGRGFKIKKPTCHITVSLKEVL.

This sequence belongs to the universal ribosomal protein uL22 family. Part of the 50S ribosomal subunit.

Its subcellular location is the plastid. It is found in the chloroplast. Functionally, this protein binds specifically to 23S rRNA. The globular domain of the protein is located near the polypeptide exit tunnel on the outside of the subunit, while an extended beta-hairpin is found that lines the wall of the exit tunnel in the center of the 70S ribosome. The protein is Large ribosomal subunit protein uL22c (rpl22) of Rhodomonas salina (Cryptomonas salina).